The primary structure comprises 152 residues: Aspartate carbamoyltransferase regulatory chain (152 aa).

Zn(2+) contacts are provided by cysteine 108, cysteine 113, cysteine 137, and cysteine 140.

The protein belongs to the PyrI family. In terms of assembly, contains catalytic and regulatory chains. It depends on Zn(2+) as a cofactor.

In terms of biological role, involved in allosteric regulation of aspartate carbamoyltransferase. The protein is Aspartate carbamoyltransferase regulatory chain of Neisseria meningitidis serogroup B (strain ATCC BAA-335 / MC58).